Reading from the N-terminus, the 491-residue chain is Probable cytosol aminopeptidase (491 aa).

Mn(2+) is bound by residues lysine 263 and aspartate 268. The active site involves lysine 275. Mn(2+)-binding residues include aspartate 286, aspartate 345, and glutamate 347. Arginine 349 is a catalytic residue.

It belongs to the peptidase M17 family. Mn(2+) serves as cofactor.

The protein localises to the cytoplasm. The enzyme catalyses Release of an N-terminal amino acid, Xaa-|-Yaa-, in which Xaa is preferably Leu, but may be other amino acids including Pro although not Arg or Lys, and Yaa may be Pro. Amino acid amides and methyl esters are also readily hydrolyzed, but rates on arylamides are exceedingly low.. It carries out the reaction Release of an N-terminal amino acid, preferentially leucine, but not glutamic or aspartic acids.. Its function is as follows. Presumably involved in the processing and regular turnover of intracellular proteins. Catalyzes the removal of unsubstituted N-terminal amino acids from various peptides. In Haemophilus influenzae (strain PittEE), this protein is Probable cytosol aminopeptidase.